The following is a 241-amino-acid chain: 15,16-dihydrobiliverdin:ferredoxin oxidoreductase (241 aa).

Positions 16–35 (RGGQPAAVPEGLEHCHSSKS) are disordered.

This sequence belongs to the HY2 family.

The catalysed reaction is 15,16-dihydrobiliverdin + oxidized 2[4Fe-4S]-[ferredoxin] = biliverdin IXalpha + reduced 2[4Fe-4S]-[ferredoxin] + 2 H(+). In terms of biological role, catalyzes the two-electron reduction of biliverdin IX-alpha at the C15 methine bridge. The polypeptide is 15,16-dihydrobiliverdin:ferredoxin oxidoreductase (Synechococcus sp. (strain WH7803)).